The following is a 244-amino-acid chain: Ribonuclease 3 (244 aa).

Residues 5–136 (LAELERAIGI…LVGAIYLDQG (132 aa)) enclose the RNase III domain. E49 provides a ligand contact to Mg(2+). D53 is an active-site residue. Mg(2+)-binding residues include D122 and E125. Residue E125 is part of the active site. The DRBM domain maps to 161 to 229 (DPTTRLQELM…ARKALAAWDK (69 aa)).

It belongs to the ribonuclease III family. In terms of assembly, homodimer. The cofactor is Mg(2+).

The protein localises to the cytoplasm. It carries out the reaction Endonucleolytic cleavage to 5'-phosphomonoester.. Digests double-stranded RNA. Involved in the processing of primary rRNA transcript to yield the immediate precursors to the large and small rRNAs (23S and 16S). Processes some mRNAs, and tRNAs when they are encoded in the rRNA operon. Processes pre-crRNA and tracrRNA of type II CRISPR loci if present in the organism. This is Ribonuclease 3 from Chloroflexus aurantiacus (strain ATCC 29364 / DSM 637 / Y-400-fl).